A 57-amino-acid polypeptide reads, in one-letter code: Large ribosomal subunit protein bL32 (57 aa).

The segment covering 1-19 has biased composition (basic residues); sequence MAVPKRRMSRSNTRSRRSQ. Residues 1–22 form a disordered region; that stretch reads MAVPKRRMSRSNTRSRRSQWKA.

Belongs to the bacterial ribosomal protein bL32 family.

The chain is Large ribosomal subunit protein bL32 from Rhodococcus jostii (strain RHA1).